The primary structure comprises 460 residues: Cysteine--tRNA ligase (460 aa).

Cys-28 contacts Zn(2+). The 'HIGH' region signature appears at 30–40 (MTVYDYCHLGH). Cys-209, His-234, and Glu-238 together coordinate Zn(2+). A 'KMSKS' region motif is present at residues 266-270 (KMSKS). Lys-269 contributes to the ATP binding site.

The protein belongs to the class-I aminoacyl-tRNA synthetase family. In terms of assembly, monomer. Zn(2+) serves as cofactor.

Its subcellular location is the cytoplasm. The enzyme catalyses tRNA(Cys) + L-cysteine + ATP = L-cysteinyl-tRNA(Cys) + AMP + diphosphate. The polypeptide is Cysteine--tRNA ligase (Pseudomonas putida (strain W619)).